We begin with the raw amino-acid sequence, 676 residues long: Pentatricopeptide repeat-containing protein ATP4 homolog, chloroplastic (676 aa).

A chloroplast-targeting transit peptide spans 1 to 73 (MASPSSLLSW…NSPRAAGLAR (73 aa)). Positions 17–58 (LSFQPKNPSPSPATARVSVQDPPPPPSDANPSPGRSSNTSRY) are disordered. 10 PPR repeats span residues 148-182 (EVIL…GVQP), 183-217 (DNAT…GCSP), 218-252 (DMLT…KWQL), 253-287 (DPVI…GVKP), 288-322 (NLVV…EAVP), 323-353 (NKAT…MKDE), 358-388 (DVVL…MKAS), 396-430 (DSWS…GFKP), 431-465 (NIFI…GITP), and 532-566 (RMPY…GIYS). The 85-residue stretch at 578–662 (LHLRGLSVGA…WFLTTSVAAR (85 aa)) folds into the Smr domain.

This sequence belongs to the PPR family. P subfamily.

The protein localises to the plastid. Its subcellular location is the chloroplast. Involved in translation and accumulation of chloroplast ATP synthase subunits. The sequence is that of Pentatricopeptide repeat-containing protein ATP4 homolog, chloroplastic from Oryza sativa subsp. japonica (Rice).